The primary structure comprises 265 residues: Hydroxyethylthiazole kinase (265 aa).

Residue Met50 coordinates substrate. The ATP site is built by Arg125 and Thr171. Gly198 provides a ligand contact to substrate.

This sequence belongs to the Thz kinase family. Mg(2+) serves as cofactor.

It carries out the reaction 5-(2-hydroxyethyl)-4-methylthiazole + ATP = 4-methyl-5-(2-phosphooxyethyl)-thiazole + ADP + H(+). It participates in cofactor biosynthesis; thiamine diphosphate biosynthesis; 4-methyl-5-(2-phosphoethyl)-thiazole from 5-(2-hydroxyethyl)-4-methylthiazole: step 1/1. In terms of biological role, catalyzes the phosphorylation of the hydroxyl group of 4-methyl-5-beta-hydroxyethylthiazole (THZ). The polypeptide is Hydroxyethylthiazole kinase (Salmonella paratyphi A (strain ATCC 9150 / SARB42)).